We begin with the raw amino-acid sequence, 279 residues long: Epidermal growth factor-like protein 7 (279 aa).

Positions 1-21 (MWGSGELLVAWFLVLAAGGTT) are cleaved as a signal peptide. An EMI domain is found at 28-109 (SRRVCTVGVS…TNGLPGACGA (82 aa)). 9 disulfides stabilise this stretch: Cys-32/Cys-94, Cys-57/Cys-63, Cys-93/Cys-107, Cys-112/Cys-122, Cys-116/Cys-128, Cys-130/Cys-139, Cys-146/Cys-157, Cys-153/Cys-166, and Cys-168/Cys-181. In terms of domain architecture, EGF-like 1 spans 108–140 (GAAICQPPCGNEGSCIRPGRCRCPVGWQGDTCQ). Positions 131–133 (PVG) match the Cell attachment site motif. An EGF-like 2; calcium-binding domain is found at 142 to 182 (DVDECSTGEARCPQRCVNTVGSYWCQCWEGQSPSADGVLCL). Coiled-coil stretches lie at residues 200–224 (SVVR…QLVL) and 250–274 (FQQL…GSCS).

Interacts with ITGAV/ITGB3 in an RGD-dependent manner, increasing endothelial cell's motility.

The protein resides in the secreted. It is found in the extracellular space. Functionally, regulates vascular tubulogenesis in vivo. Inhibits platelet-derived growth factor (PDGF)-BB-induced smooth muscle cell migration and promotes endothelial cell adhesion to the extracellular matrix and angiogenesis. The sequence is that of Epidermal growth factor-like protein 7 (Egfl7) from Rattus norvegicus (Rat).